The following is a 2568-amino-acid chain: Highly reducing polyketide synthase AN6791 (2568 aa).

The 435-residue stretch at 11-445 (AEPIAIVGLS…GTNAHLIVES (435 aa)) folds into the Ketosynthase family 3 (KS3) domain. Residues cysteine 200, histidine 326, and histidine 366 each act as for beta-ketoacyl synthase activity in the active site. The Malonyl-CoA:ACP transacylase (MAT) domain occupies 558–882 (VFTGQGAQWY…GSLVREVSAV (325 aa)). The N-terminal hotdog fold stretch occupies residues 949–1087 (HDLLGSLVLG…GLITMEPEDA (139 aa)). A PKS/mFAS DH domain is found at 949 to 1258 (HDLLGSLVLG…FQSVGRSAAP (310 aa)). The active-site Proton acceptor; for dehydratase activity is histidine 981. The interval 1104–1258 (TRRFGPSDLY…FQSVGRSAAP (155 aa)) is C-terminal hotdog fold. Catalysis depends on aspartate 1169, which acts as the Proton donor; for dehydratase activity. Residues 1311 to 1620 (RACLYFIYDA…EVRDCESDEW (310 aa)) are methyltransferase (CMet) domain. The 318-residue stretch at 1857 to 2174 (GLLDTIAFDD…VGKHSGKVVL (318 aa)) folds into the Enoyl reductase (ER) domain. Residues 2197 to 2375 (ASYLLVGGAG…AVSMDLGPVK (179 aa)) form the Ketoreductase (KR) domain. Residues 2481-2558 (QAEKLVVEAI…ALASEVTRKS (78 aa)) form the Carrier domain. Serine 2518 is modified (O-(pantetheine 4'-phosphoryl)serine).

Pantetheine 4'-phosphate is required as a cofactor.

It functions in the pathway secondary metabolite biosynthesis. Its function is as follows. Highly reducing polyketide synthase; part of a cluster that mediates the biosynthesis of a yet undetermined secondary metabolite. With esterase AN6793, produces a pathway intermediate compound with molecular weight 258. This chain is Highly reducing polyketide synthase AN6791, found in Emericella nidulans (strain FGSC A4 / ATCC 38163 / CBS 112.46 / NRRL 194 / M139) (Aspergillus nidulans).